A 601-amino-acid polypeptide reads, in one-letter code: Elongation factor 4 (601 aa).

Positions 7–189 constitute a tr-type G domain; it reads SNIRNFSIVA…AIVHRLPPPQ (183 aa). Residues 19–24 and 136–139 each bind GTP; these read DHGKST and NKVD.

Belongs to the TRAFAC class translation factor GTPase superfamily. Classic translation factor GTPase family. LepA subfamily.

It localises to the cell inner membrane. The enzyme catalyses GTP + H2O = GDP + phosphate + H(+). Its function is as follows. Required for accurate and efficient protein synthesis under certain stress conditions. May act as a fidelity factor of the translation reaction, by catalyzing a one-codon backward translocation of tRNAs on improperly translocated ribosomes. Back-translocation proceeds from a post-translocation (POST) complex to a pre-translocation (PRE) complex, thus giving elongation factor G a second chance to translocate the tRNAs correctly. Binds to ribosomes in a GTP-dependent manner. The sequence is that of Elongation factor 4 from Rhodopseudomonas palustris (strain BisB18).